Reading from the N-terminus, the 908-residue chain is Serine/threonine-protein kinase minibrain (908 aa).

Disordered regions lie at residues 1–46 (MYRL…QRHA) and 119–143 (KKRRAQQTQGDDDSSNKKERKLYND). The Bipartite nuclear localization signal motif lies at 121 to 139 (RRAQQTQGDDDSSNKKERK). A compositionally biased stretch (basic and acidic residues) spans 132-141 (SSNKKERKLY). Positions 164–484 (YEIDSLIGKG…PYYALQHNFF (321 aa)) constitute a Protein kinase domain. Residues 170–178 (IGKGSFGQV), K193, and 243–246 (FELL) each bind ATP. D292 functions as the Proton acceptor in the catalytic mechanism. Disordered regions lie at residues 552–592 (AAGS…AGPG), 623–669 (NAHP…RHSR), and 863–895 (PAAQVGISQSVGSGSSGSATGASSSDASSSSPM). Gly residues predominate over residues 556–566 (SGSGSSVGGGS). Residues 567-576 (SAAQQQQAMP) are compositionally biased toward low complexity. The span at 577–589 (LPLPLPLPLPPLA) shows a compositional bias: pro residues. Positions 623-654 (NAHPPPSLANSHHSTNSLGSLNHISPGSTGCH) are enriched in polar residues. 2 stretches are compositionally biased toward low complexity: residues 655 to 664 (NNNSNSSNNN) and 868 to 893 (GISQSVGSGSSGSATGASSSDASSSS).

The protein belongs to the protein kinase superfamily. CMGC Ser/Thr protein kinase family. MNB/DYRK subfamily. In ventral nerve cord and supraesophageal ganglion of embryos. Is most prominent in the mushroom body neuropil and the outer proliferation center of the optic lobes in third instar larvae.

Its subcellular location is the nucleus. The catalysed reaction is L-seryl-[protein] + ATP = O-phospho-L-seryl-[protein] + ADP + H(+). It carries out the reaction L-threonyl-[protein] + ATP = O-phospho-L-threonyl-[protein] + ADP + H(+). The enzyme catalyses L-tyrosyl-[protein] + ATP = O-phospho-L-tyrosyl-[protein] + ADP + H(+). In terms of biological role, role in the specific control of proper proliferation of optic lobe neuronal progeny. This is Serine/threonine-protein kinase minibrain (mnb) from Drosophila melanogaster (Fruit fly).